Reading from the N-terminus, the 313-residue chain is Olfactory receptor 1J4 (313 aa).

Topologically, residues 1–25 (MKRENQSSVSEFLLLDLPIWPEQQA) are extracellular. Asn-5 carries an N-linked (GlcNAc...) asparagine glycan. A helical transmembrane segment spans residues 26 to 49 (VFFTLFLGMYLITVLGNLLIILLI). At 50–57 (RLDSHLHT) the chain is on the cytoplasmic side. The helical transmembrane segment at 58–79 (PMFFFLSHLALTDISLSSVTVP) threads the bilayer. The Extracellular portion of the chain corresponds to 80–100 (KMLLSMQTQDQSILYAGCVTQ). Cys-97 and Cys-189 are oxidised to a cystine. Residues 101-120 (MYFFIFFTDLDNFLLTSMAY) traverse the membrane as a helical segment. The Cytoplasmic portion of the chain corresponds to 121–139 (DRYVAICHPLRYTTIMKEG). A helical transmembrane segment spans residues 140-158 (LCNLLVTVSWILSCTNALS). At 159-195 (HTLLLAQLSFCADNTIPHFFCDLVALLKLSCSDISLN) the chain is on the extracellular side. Residues 196–219 (ELVIFTVGQAVITLPLICILISYG) traverse the membrane as a helical segment. Topologically, residues 220–236 (HIGVTILKAPSTKGIFK) are cytoplasmic. The chain crosses the membrane as a helical span at residues 237-259 (ALSTCGSHLSVVSLYYGTIIGLY). Over 260 to 272 (FLPSSSASSDKDV) the chain is Extracellular. Residues 273 to 292 (IASVMYTVITPLLNPFIYSL) form a helical membrane-spanning segment. The Cytoplasmic segment spans residues 293–313 (RNRDIKGALERLFNRATVLSQ).

Belongs to the G-protein coupled receptor 1 family.

It localises to the cell membrane. Odorant receptor. The chain is Olfactory receptor 1J4 (OR1J4) from Homo sapiens (Human).